We begin with the raw amino-acid sequence, 268 residues long: Leucyl/phenylalanyl-tRNA--protein transferase (268 aa).

The protein belongs to the L/F-transferase family.

The protein resides in the cytoplasm. It catalyses the reaction N-terminal L-lysyl-[protein] + L-leucyl-tRNA(Leu) = N-terminal L-leucyl-L-lysyl-[protein] + tRNA(Leu) + H(+). The catalysed reaction is N-terminal L-arginyl-[protein] + L-leucyl-tRNA(Leu) = N-terminal L-leucyl-L-arginyl-[protein] + tRNA(Leu) + H(+). The enzyme catalyses L-phenylalanyl-tRNA(Phe) + an N-terminal L-alpha-aminoacyl-[protein] = an N-terminal L-phenylalanyl-L-alpha-aminoacyl-[protein] + tRNA(Phe). Its function is as follows. Functions in the N-end rule pathway of protein degradation where it conjugates Leu, Phe and, less efficiently, Met from aminoacyl-tRNAs to the N-termini of proteins containing an N-terminal arginine or lysine. The protein is Leucyl/phenylalanyl-tRNA--protein transferase of Psychrobacter arcticus (strain DSM 17307 / VKM B-2377 / 273-4).